Here is an 88-residue protein sequence, read N- to C-terminus: Large ribosomal subunit protein bL27 (88 aa).

The disordered stretch occupies residues 1-24 (MAHKKGTGSTRNGRDSNSKRLGVK).

Belongs to the bacterial ribosomal protein bL27 family.

The sequence is that of Large ribosomal subunit protein bL27 from Prochlorococcus marinus (strain MIT 9303).